Here is a 257-residue protein sequence, read N- to C-terminus: Urease accessory protein UreD (257 aa).

It belongs to the UreD family. As to quaternary structure, ureD, UreF and UreG form a complex that acts as a GTP-hydrolysis-dependent molecular chaperone, activating the urease apoprotein by helping to assemble the nickel containing metallocenter of UreC. The UreE protein probably delivers the nickel.

It is found in the cytoplasm. Its function is as follows. Required for maturation of urease via the functional incorporation of the urease nickel metallocenter. The polypeptide is Urease accessory protein UreD (Ruegeria pomeroyi (strain ATCC 700808 / DSM 15171 / DSS-3) (Silicibacter pomeroyi)).